Consider the following 385-residue polypeptide: Protein-glutamate methylesterase/protein-glutamine glutaminase (385 aa).

Residues 20-138 enclose the Response regulatory domain; that stretch reads RVMIVDDSVV…EASAADIFKH (119 aa). Residue Asp71 is modified to 4-aspartylphosphate. The 195-residue stretch at 189–383 folds into the CheB-type methylesterase domain; sequence GVTAPRVLLI…PKLVRLFSGD (195 aa). Active-site residues include Ser201, His229, and Asp325.

Belongs to the CheB family. Post-translationally, phosphorylated by CheA. Phosphorylation of the N-terminal regulatory domain activates the methylesterase activity.

It localises to the cytoplasm. It catalyses the reaction [protein]-L-glutamate 5-O-methyl ester + H2O = L-glutamyl-[protein] + methanol + H(+). The enzyme catalyses L-glutaminyl-[protein] + H2O = L-glutamyl-[protein] + NH4(+). Involved in chemotaxis. Part of a chemotaxis signal transduction system that modulates chemotaxis in response to various stimuli. Catalyzes the demethylation of specific methylglutamate residues introduced into the chemoreceptors (methyl-accepting chemotaxis proteins or MCP) by CheR. Also mediates the irreversible deamidation of specific glutamine residues to glutamic acid. The chain is Protein-glutamate methylesterase/protein-glutamine glutaminase from Rhodopseudomonas palustris (strain BisB5).